A 453-amino-acid polypeptide reads, in one-letter code: Validoxylamine A glucosyltransferase (453 aa).

It belongs to the glycosyltransferase 2 family. Requires Mn(2+) as cofactor.

The catalysed reaction is validoxylamine A + UDP-alpha-D-glucose = validamycin A + UDP + H(+). Its function is as follows. Involved in the biosynthesis of the antifungal agent validamycin A. Catalyzes the final attachment of glucose from UDP-alpha-D-glucose to validoxylamine A to yield validamycin A. This chain is Validoxylamine A glucosyltransferase, found in Streptomyces hygroscopicus subsp. limoneus.